The sequence spans 67 residues: Large ribosomal subunit protein uL29 (67 aa).

It belongs to the universal ribosomal protein uL29 family.

The sequence is that of Large ribosomal subunit protein uL29 from Pelotomaculum thermopropionicum (strain DSM 13744 / JCM 10971 / SI).